Here is a 146-residue protein sequence, read N- to C-terminus: Large ribosomal subunit protein uL13 (146 aa).

Belongs to the universal ribosomal protein uL13 family. Part of the 50S ribosomal subunit.

Functionally, this protein is one of the early assembly proteins of the 50S ribosomal subunit, although it is not seen to bind rRNA by itself. It is important during the early stages of 50S assembly. In Bdellovibrio bacteriovorus (strain ATCC 15356 / DSM 50701 / NCIMB 9529 / HD100), this protein is Large ribosomal subunit protein uL13.